Here is a 113-residue protein sequence, read N- to C-terminus: Large ribosomal subunit protein uL24 (113 aa).

Belongs to the universal ribosomal protein uL24 family. Part of the 50S ribosomal subunit.

Functionally, one of two assembly initiator proteins, it binds directly to the 5'-end of the 23S rRNA, where it nucleates assembly of the 50S subunit. In terms of biological role, one of the proteins that surrounds the polypeptide exit tunnel on the outside of the subunit. In Chlamydia abortus (strain DSM 27085 / S26/3) (Chlamydophila abortus), this protein is Large ribosomal subunit protein uL24.